Reading from the N-terminus, the 2521-residue chain is Piezo-type mechanosensitive ion channel component 1 (2521 aa).

The Cytoplasmic portion of the chain corresponds to 1 to 12 (MEPHVLGAVLYW). Residues 13 to 25 (LLLPCALLAACLL) form a helical membrane-spanning segment. Over 26–28 (RFS) the chain is Extracellular. The helical transmembrane segment at 29–44 (GLSLVYLLFLLLLPWF) threads the bilayer. Topologically, residues 45 to 58 (PGPTRCGLQGHTGR) are cytoplasmic. The chain crosses the membrane as a helical span at residues 59–81 (LLRALLGLSLLFLVAHLALQICL). Residues 82-121 (HIVPRLDQLLGPSCSRWETLSRHIGVTRLDLKDIPNAIRL) lie on the Extracellular side of the membrane. A helical transmembrane segment spans residues 122-138 (VAPDLGILVVSSVCLGI). At 139–194 (CGRLARNTRQSPHPRELDDDERDVDASPTAGLQEAATLAPTRRSRLAARFRVTAHW) the chain is on the cytoplasmic side. Residues 195–214 (LLVAAGRVLAVTLLALAGIA) form a helical membrane-spanning segment. The Extracellular segment spans residues 215 to 216 (HP). A helical membrane pass occupies residues 217-236 (SALSSVYLLLFLALCTWWAC). The Cytoplasmic segment spans residues 237–247 (HFPISTRGFSR). A helical membrane pass occupies residues 248–268 (LCVAVGCFGAGHLICLYCYQM). The Extracellular portion of the chain corresponds to 269-309 (PLAQALLPPAGIWARVLGLKDFVGPTNCSSPHALVLNTGLD). Asn-295 carries N-linked (GlcNAc...) asparagine glycosylation. The chain crosses the membrane as a helical span at residues 310–330 (WPVYASPGVLLLLCYATASLR). The Cytoplasmic segment spans residues 331-417 (KLRAYRPSGQ…EASPLHSLGH (87 aa)). Residues 418 to 438 (LIMDQSYVCALIAMMVWSITY) traverse the membrane as a helical segment. The Extracellular portion of the chain corresponds to 439-440 (HS). A helical membrane pass occupies residues 441–456 (WLTFVLLLWACLIWTV). The Cytoplasmic portion of the chain corresponds to 457 to 461 (RSRHQ). A helical membrane pass occupies residues 462 to 484 (LAMLCSPCILLYGMTLCCLRYVW). At 485–512 (AMDLRPELPTTLGPVSLRQLGLEHTRYP) the chain is on the extracellular side. The helical transmembrane segment at 513–530 (CLDLGAMLLYTLTFWLLL) threads the bilayer. At 531–574 (RQFVKEKLLKWAESPAALTEVTVADTEPTRTQTLLQSLGELVKG) the chain is on the cytoplasmic side. Residues 575 to 595 (VYAKYWIYVCAGMFIVVSFAG) form a helical membrane-spanning segment. Arg-596 is a topological domain (extracellular). Residues 597–617 (LVVYKIVYMFLFLLCLTLFQV) traverse the membrane as a helical segment. Over 618-627 (YYSLWRKLLK) the chain is Cytoplasmic. Residues 628 to 649 (AFWWLVVAYTMLVLIAVYTFQF) form a helical membrane-spanning segment. At 650-679 (QDFPAYWRNLTGFTDEQLGDLGLEQFSVSE) the chain is on the extracellular side. The helical transmembrane segment at 680-696 (LFSSILVPGFFLLACIL) threads the bilayer. At 697 to 816 (QLHYFHRPFM…RRLLELHVFK (120 aa)) the chain is on the cytoplasmic side. Phosphothreonine is present on Thr-734. The interval 738–769 (REEQQEHQQQQQEEEEEEEDSRDEGLGVATPH) is disordered. Residues 749 to 759 (QEEEEEEEDSR) are compositionally biased toward acidic residues. Ser-758 bears the Phosphoserine mark. The helical transmembrane segment at 817–828 (LVALYTVWVALK) threads the bilayer. Residues 829–831 (EVS) lie on the Extracellular side of the membrane. Residues 832–845 (VMNLLLVVLWAFAL) traverse the membrane as a helical segment. The Cytoplasmic portion of the chain corresponds to 846–859 (PYPRFRPMASCLST). The chain crosses the membrane as a helical span at residues 860–874 (VWTCVIIVCKMLYQL). The Extracellular portion of the chain corresponds to 875–926 (KVVNPQEYSSNCTEPFPNSTNLLPTEISQSLLYRGPVDPANWFGVRKGFPNL). The chain crosses the membrane as a helical span at residues 927 to 954 (GYIQNHLQVLLLLVFEAIVYRRQEHYRR). Residues 955–994 (QHQLAPLPAQAVFASGTRQQLDQDLLGCLKYFINFFFYKF) lie on the Cytoplasmic side of the membrane. Residues 995–1010 (GLEICFLMAVNVIGQR) form a helical membrane-spanning segment. The Extracellular portion of the chain corresponds to 1011–1012 (MN). The helical transmembrane segment at 1013–1028 (FLVTLHGCWLVAILTR) threads the bilayer. The Cytoplasmic segment spans residues 1029–1041 (RHRQAIARLWPNY). A helical membrane pass occupies residues 1042 to 1057 (CLFLALFLLYQYLLCL). The Extracellular segment spans residues 1058–1096 (GMPPALCIDYPWRWSRAVPMNSALIKWLYLPDFFRAPNS). Residues 1097-1118 (TNLISDFLLLLCASQQWQVFSA) form a helical membrane-spanning segment. Topologically, residues 1119–1153 (ERTEEWQRMAGVNTDRLEPLRGEPNPVPNFIHCRS) are cytoplasmic. Residues 1154–1180 (YLDMLKVAVFRYLFWLVLVVVFVTGAT) traverse the membrane as a helical segment. Topologically, residues 1181-1185 (RISIF) are extracellular. Residues 1186–1204 (GLGYLLACFYLLLFGTALL) form a helical membrane-spanning segment. Topologically, residues 1205–1217 (QRDTRARLVLWDC) are cytoplasmic. Residues 1218 to 1236 (LILYNVTVIISKNMLSLLA) traverse the membrane as a helical segment. At 1237–1285 (CVFVEQMQTGFCWVIQLFSLVCTVKGYYDPKEMMDRDQDCLLPVEEAGI) the chain is on the extracellular side. The helical transmembrane segment at 1286-1302 (IWDSVCFFFLLLQRRVF) threads the bilayer. Topologically, residues 1303 to 1656 (LSHYYLHVRA…ELLLDRRLRI (354 aa)) are cytoplasmic. Residues 1339–1368 (HRRIEEKSLAQLKRQMERIRAKQEKHRQGR) are a coiled coil. Disordered regions lie at residues 1356–1402 (RIRA…RRQW), 1462–1498 (RQQEQEQARQEQAGQLPTGGGPSQEVEPAEGPEEAAA), and 1576–1630 (TLPG…DPGE). Low complexity predominate over residues 1385-1398 (LEPGPDSPGGSSPP). Ser-1391 and Ser-1396 each carry phosphoserine. Phosphoserine occurs at positions 1636 and 1646. Residues 1657–1700 (PELEEAELFAEGQGRALRLLRAVYQCVAAHSELLCYFIIILNHM) traverse the membrane as a helical segment. Over 1701-1704 (VTAS) the chain is Extracellular. Residues 1705–1720 (AGSLVLPVLVFLWAML) traverse the membrane as a helical segment. At 1721–1728 (SIPRPSKR) the chain is on the cytoplasmic side. Residues 1729 to 1747 (FWMTAIVFTEIAVVVKYLF) traverse the membrane as a helical segment. At 1748 to 1779 (QFGFFPWNSHVVLRRYENKPYFPPRILGLEKT) the chain is on the extracellular side. Residues 1780-1801 (DGYIKYDLVQLMALFFHRSQLL) form a helical membrane-spanning segment. The Cytoplasmic segment spans residues 1802-1960 (CYGLWDHEED…HTKYRAATDV (159 aa)). The segment covering 1811–1822 (DSPSKEHDKSGE) has biased composition (basic and acidic residues). The tract at residues 1811-1921 (DSPSKEHDKS…RPSRSGGRVR (111 aa)) is disordered. Thr-1854 carries the phosphothreonine modification. Over residues 1859 to 1868 (VELRPRDTRR) the composition is skewed to basic and acidic residues. The segment covering 1869–1878 (ISLRFRRRKK) has biased composition (basic residues). Residues 1890–1903 (EAEDREEEEGEEEK) show a composition bias toward acidic residues. The segment covering 1904-1913 (EAPTGREKRP) has biased composition (basic and acidic residues). The helical transmembrane segment at 1961 to 1980 (YALMFLADVVDFIIIIFGFW) threads the bilayer. The Extracellular segment spans residues 1981-2000 (AFGKHSAATDITSSLSDDQV). The chain crosses the membrane as a helical span at residues 2001-2017 (PEAFLVMLLIQFSTMVV). Residues 2018-2031 (DRALYLRKTVLGKL) lie on the Cytoplasmic side of the membrane. A helical membrane pass occupies residues 2032–2052 (AFQVALVLAIHLWMFFILPAV). At 2053–2060 (TERMFNQN) the chain is on the extracellular side. Residues 2061-2076 (VVAQLWYFVKCIYFAL) form a helical membrane-spanning segment. At 2077 to 2176 (SAYQIRCGYP…KKKIVKYGMG (100 aa)) the chain is on the cytoplasmic side. Residues 2177–2197 (GLIILFLIAIIWFPLLFMSLV) form a helical membrane-spanning segment. Residues 2198-2431 (RSVVGVVNQP…IFSDKVSPPS (234 aa)) lie on the Extracellular side of the membrane. An N-linked (GlcNAc...) asparagine glycan is attached at Asn-2294. Cysteines 2411 and 2415 form a disulfide. The chain crosses the membrane as a helical span at residues 2432–2452 (LGFLAGYGIMGLYVSIVLVIG). Residues 2453–2521 (KFVRGFFSEI…TMIKWTREKE (69 aa)) lie on the Cytoplasmic side of the membrane.

It belongs to the PIEZO (TC 1.A.75) family. In terms of assembly, homotrimer; the homotrimer forms a propeller-shaped Piezo channel with a cation-ion conducting pore. Heterotrimeric interaction may occur between PIEZO1 and PIEZO2. Interacts with PKD2. Interacts with STOML3. Interacts with TMC1, TMC2, PCDH15 and CIB2; the interaction may be part of the MET complex. Interacts with MDFIC (via C-terminus); the interaction prolongs Piezo channel inactivation. Interacts with MDFI (via C-terminus); the interaction prolongs Piezo channel inactivation. In terms of tissue distribution, expressed in numerous tissues. In normal brain, expressed exclusively in neurons, not in astrocytes. In Alzheimer disease brains, expressed in about half of the activated astrocytes located around classical senile plaques. In Parkinson disease substantia nigra, not detected in melanin-containing neurons nor in activated astrocytes. Expressed in erythrocytes (at protein level). Expressed in myoblasts (at protein level).

It localises to the endoplasmic reticulum membrane. It is found in the endoplasmic reticulum-Golgi intermediate compartment membrane. Its subcellular location is the cell membrane. The protein resides in the cell projection. The protein localises to the lamellipodium membrane. It carries out the reaction K(+)(in) = K(+)(out). The catalysed reaction is Na(+)(in) = Na(+)(out). The enzyme catalyses Ca(2+)(in) = Ca(2+)(out). It catalyses the reaction Mg(2+)(in) = Mg(2+)(out). With respect to regulation, regulated by auxillary subunits MDFIC and MDFI. Down-regulated by phosphatidylserines exposed on the cell surface. Divalent ions decrease the single-channel permeability of K(+). Pore-forming subunit of the mechanosensitive non-specific cation Piezo channel required for rapidly adapting mechanically activated (MA) currents and has a key role in sensing touch and tactile pain. Piezo channels are homotrimeric three-blade propeller-shaped structures that utilize a cap-motion and plug-and-latch mechanism to gate their ion-conducting pathways. Generates currents characterized by a linear current-voltage relationship that are sensitive to ruthenium red and gadolinium. Conductance to monovalent alkali ions is highest for K(+), intermediate for Na(+) and lowest for Li(+). Divalent ions except for Mn(2+) permeate the channel but more slowly than the monovalent ions and they also reduce K(+) currents. Plays a key role in epithelial cell adhesion by maintaining integrin activation through R-Ras recruitment to the ER, most probably in its activated state, and subsequent stimulation of calpain signaling. In inner ear hair cells, PIEZO1/2 subunits may constitute part of the mechanotransducer (MET) non-selective cation channel complex where they may act as pore-forming ion-conducting component in the complex. In the kidney, may contribute to the detection of intraluminal pressure changes and to urine flow sensing. Acts as a shear-stress sensor that promotes endothelial cell organization and alignment in the direction of blood flow through calpain activation. Plays a key role in blood vessel formation and vascular structure in both development and adult physiology. Acts as a sensor of phosphatidylserine (PS) flipping at the plasma membrane and governs morphogenesis of muscle cells. In myoblasts, flippase-mediated PS enrichment at the inner leaflet of plasma membrane triggers channel activation and Ca2+ influx followed by Rho GTPases signal transduction, leading to assembly of cortical actomyosin fibers and myotube formation. The polypeptide is Piezo-type mechanosensitive ion channel component 1 (Homo sapiens (Human)).